An 86-amino-acid chain; its full sequence is Exodeoxyribonuclease 7 small subunit (86 aa).

The protein belongs to the XseB family. In terms of assembly, heterooligomer composed of large and small subunits.

Its subcellular location is the cytoplasm. The catalysed reaction is Exonucleolytic cleavage in either 5'- to 3'- or 3'- to 5'-direction to yield nucleoside 5'-phosphates.. Its function is as follows. Bidirectionally degrades single-stranded DNA into large acid-insoluble oligonucleotides, which are then degraded further into small acid-soluble oligonucleotides. The chain is Exodeoxyribonuclease 7 small subunit from Xanthomonas euvesicatoria pv. vesicatoria (strain 85-10) (Xanthomonas campestris pv. vesicatoria).